Consider the following 142-residue polypeptide: Small ribosomal subunit protein uS12 (142 aa).

Positions 1-43 are disordered; the sequence is MPTFNQLVRKGRKVIEKKSNSPALQKGFNSKKKKPTDVNSPQK. 3-methylthioaspartic acid is present on Asp102.

Belongs to the universal ribosomal protein uS12 family. Part of the 30S ribosomal subunit. Contacts proteins S8 and S17. May interact with IF1 in the 30S initiation complex.

Functionally, with S4 and S5 plays an important role in translational accuracy. Interacts with and stabilizes bases of the 16S rRNA that are involved in tRNA selection in the A site and with the mRNA backbone. Located at the interface of the 30S and 50S subunits, it traverses the body of the 30S subunit contacting proteins on the other side and probably holding the rRNA structure together. The combined cluster of proteins S8, S12 and S17 appears to hold together the shoulder and platform of the 30S subunit. This chain is Small ribosomal subunit protein uS12, found in Ruminiclostridium cellulolyticum (strain ATCC 35319 / DSM 5812 / JCM 6584 / H10) (Clostridium cellulolyticum).